Reading from the N-terminus, the 84-residue chain is Defensin-like protein 140 (84 aa).

The first 28 residues, 1–28 (MSKSLQLIVTVLCIFTILVLGEICLAKG), serve as a signal peptide directing secretion. Intrachain disulfides connect Cys-37/Cys-81, Cys-46/Cys-65, Cys-51/Cys-75, and Cys-55/Cys-77.

Belongs to the DEFL family.

It localises to the secreted. This is Defensin-like protein 140 (LCR15) from Arabidopsis thaliana (Mouse-ear cress).